Consider the following 150-residue polypeptide: Transthyretin (150 aa).

An N-terminal signal peptide occupies residues 1–20 (MGSSSLLLVCLAGMVYLTEA). A Sulfocysteine modification is found at Cys-33. Lys-38, Glu-77, and Ser-140 together coordinate L-thyroxine.

This sequence belongs to the transthyretin family. In terms of assembly, homotetramer. Dimer of dimers. In the homotetramer, subunits assemble around a central channel that can accommodate two ligand molecules. Interacts with RBP4. Sulfonation of the reactive cysteine Cys-33 enhances the stability of the native conformation of TTR, avoiding misassembly of the protein leading to amyloid formation. In terms of tissue distribution, detected in choroid plexus (at protein level). Detected in choroid plexus.

Its subcellular location is the secreted. In terms of biological role, thyroid hormone-binding protein. Probably transports thyroxine from the bloodstream to the brain. This Tiliqua rugosa (Shingleback lizard) protein is Transthyretin (TTR).